We begin with the raw amino-acid sequence, 434 residues long: MFLDTAKIKVKAGNGGDGMVAFRREKYVPNGGPWGGDGGRGGNVVFVVDEGLRTLMDFRYNRHFKADSGEKGMTKGMHGRGAEDLRVRVPQGTTVRDAETGKVLTDLIEHGQEFIVAHGGRGGRGNIRFATPKNPAPEISENGEPGQERELQLELKILADVGLVGFPSVGKSTLLSVITSAKPKIGAYHFTTIVPNLGMVRTQSGESFAVADLPGLIEGASQGVGLGTQFLRHIERTRVILHIIDMSASEGRDPYEDYLAINKELESYNLRLMERPQIIVANKMDMPESQENLEDFKKKLAENYDEFEELPAIFPISGLTKQGLATLLDATAELLDKTPEFLLYDESDMEEEAYYGFDEEEKAFEISRDDDATWVLSGEKLMKLFNMTNFDRDESVMKFARQLRGMGGDEALRARGAKDGDLVRIGKFEFEFVD.

Residues 1–158 (MFLDTAKIKV…RELQLELKIL (158 aa)) form the Obg domain. Residues 159–336 (ADVGLVGFPS…LLDATAELLD (178 aa)) form the OBG-type G domain. GTP is bound by residues 165–172 (GFPSVGKS), 190–194 (FTTIV), 212–215 (DLPG), 282–285 (NKMD), and 317–319 (SGL). Ser172 and Thr192 together coordinate Mg(2+). An OCT domain is found at 356–434 (GFDEEEKAFE…IGKFEFEFVD (79 aa)).

It belongs to the TRAFAC class OBG-HflX-like GTPase superfamily. OBG GTPase family. As to quaternary structure, monomer. Mg(2+) serves as cofactor.

It localises to the cytoplasm. Its function is as follows. An essential GTPase which binds GTP, GDP and possibly (p)ppGpp with moderate affinity, with high nucleotide exchange rates and a fairly low GTP hydrolysis rate. Plays a role in control of the cell cycle, stress response, ribosome biogenesis and in those bacteria that undergo differentiation, in morphogenesis control. This Streptococcus pneumoniae (strain Hungary19A-6) protein is GTPase Obg.